A 155-amino-acid chain; its full sequence is Regulatory protein RecX (155 aa).

Belongs to the RecX family.

The protein localises to the cytoplasm. Functionally, modulates RecA activity. This Pseudomonas fluorescens (strain SBW25) protein is Regulatory protein RecX.